We begin with the raw amino-acid sequence, 251 residues long: Triosephosphate isomerase (251 aa).

Substrate is bound by residues Asn10 and Lys12. Catalysis depends on His95, which acts as the Electrophile. The Proton acceptor role is filled by Glu167.

The protein belongs to the triosephosphate isomerase family. In terms of assembly, homodimer.

It carries out the reaction D-glyceraldehyde 3-phosphate = dihydroxyacetone phosphate. Its pathway is carbohydrate biosynthesis; gluconeogenesis. It functions in the pathway carbohydrate degradation; glycolysis; D-glyceraldehyde 3-phosphate from glycerone phosphate: step 1/1. In Coprinopsis cinerea (strain Okayama-7 / 130 / ATCC MYA-4618 / FGSC 9003) (Inky cap fungus), this protein is Triosephosphate isomerase (TPI).